The primary structure comprises 295 residues: UDP-N-acetylenolpyruvoylglucosamine reductase (295 aa).

In terms of domain architecture, FAD-binding PCMH-type spans 27-194 (GVGGEAEVWF…TRVRLKLRRS (168 aa)). Residue Arg174 is part of the active site. Cys221 functions as the Proton donor in the catalytic mechanism. Glu287 is a catalytic residue.

The protein belongs to the MurB family. FAD serves as cofactor.

Its subcellular location is the cytoplasm. The catalysed reaction is UDP-N-acetyl-alpha-D-muramate + NADP(+) = UDP-N-acetyl-3-O-(1-carboxyvinyl)-alpha-D-glucosamine + NADPH + H(+). The protein operates within cell wall biogenesis; peptidoglycan biosynthesis. Its function is as follows. Cell wall formation. This is UDP-N-acetylenolpyruvoylglucosamine reductase from Deinococcus geothermalis (strain DSM 11300 / CIP 105573 / AG-3a).